A 379-amino-acid polypeptide reads, in one-letter code: Heme chaperone HemW (379 aa).

The region spanning 1 to 232 (MLQKPNSAYF…MDILAKNGYN (232 aa)) is the Radical SAM core domain. Residue Y9 participates in S-adenosyl-L-methionine binding. Residues C15, C19, and C22 each contribute to the [4Fe-4S] cluster site. Residues G60, 61–62 (GT), E93, Q120, R132, and D157 each bind S-adenosyl-L-methionine.

The protein belongs to the anaerobic coproporphyrinogen-III oxidase family. HemW subfamily. In terms of assembly, homodimer.

It is found in the cytoplasm. The protein resides in the cell membrane. Its function is as follows. Could serve in the delivery of heme to a membrane-localized target protein. Binds one molecule of heme per monomer, possibly covalently; heme and Fe-S cluster binding are independent. Incubation with the reductant sodium dithionite increases binding. Does not have coproporphyrinogen III dehydrogenase activity in vitro, does not complement an E.coli hemN deletion in vivo. Binds 1 Fe-S cluster, it is probably [4Fe-4S]. The cluster is coordinated with 3 cysteines and an exchangeable S-adenosyl-L-methionine; only dimeric protein has the cluster. This is Heme chaperone HemW from Lactococcus lactis subsp. lactis (strain IL1403) (Streptococcus lactis).